Reading from the N-terminus, the 93-residue chain is Sec-independent protein translocase protein TatA (93 aa).

Residues 1 to 21 (MGAMSPWHWAIVALVVVILFG) traverse the membrane as a helical segment. The disordered stretch occupies residues 44–93 (KEMQNDNSTPAPTAQQSAPAELPVADTTTAPVTPPAPVQPQPQHTEPKSA). Over residues 51–74 (STPAPTAQQSAPAELPVADTTTAP) the composition is skewed to low complexity.

It belongs to the TatA/E family. The Tat system comprises two distinct complexes: a TatABC complex, containing multiple copies of TatA, TatB and TatC subunits, and a separate TatA complex, containing only TatA subunits. Substrates initially bind to the TatABC complex, which probably triggers association of the separate TatA complex to form the active translocon.

The protein localises to the cell membrane. Its function is as follows. Part of the twin-arginine translocation (Tat) system that transports large folded proteins containing a characteristic twin-arginine motif in their signal peptide across membranes. TatA could form the protein-conducting channel of the Tat system. In Rhodococcus opacus (strain B4), this protein is Sec-independent protein translocase protein TatA.